Consider the following 372-residue polypeptide: O-methyltransferase bfoE (372 aa).

W186 contributes to the S-adenosyl-L-methionine binding site. The active-site Proton acceptor is H285.

It belongs to the class I-like SAM-binding methyltransferase superfamily. Cation-independent O-methyltransferase family.

It functions in the pathway secondary metabolite biosynthesis. Functionally, cytochrome P450 monooxygenase; part of the gene cluster that mediates the biosynthesis of bifonsecin B, a dimeric gamma-naphthopyrone. The first step in the biosynthesis of bifonsecin B is the production of gamma-naphthopyrone precursor YWA1 by the non-reducing polyketide synthase albA, via condensation of one acetyl-CoA starter unit with 6 malonyl-CoA units. YWA1 is then methylated by bfoE at position C-6 to yield foncesin which is further methylated at position C-8 by bfoD to produce fonsecin B. A key enzyme in the biosynthetic pathway is the cytochrome P450 monooxygenase bfoB which catalyzes the oxidative dimerization of fonsecin B to bifonsecin B. Bfob also catalyzes the oxidative dimerization of rubrofusarin B into nigerone. The stereoselectivity of bfoB is influenced by the two natural monomeric substrates; homodimerization of fonsecin B yields a stereochemically pure biaryl, M-foncerine B, while rubrofusarin B yields a mixture of enantiomers M- and P-nigerone. This is O-methyltransferase bfoE from Aspergillus brasiliensis (strain CBS 101740 / IMI 381727 / IBT 21946).